Consider the following 146-residue polypeptide: Deoxyuridine 5'-triphosphate nucleotidohydrolase (146 aa).

Residues 65–67 (RSG), Asn78, 82–84 (LID), and Met92 each bind substrate.

The protein belongs to the dUTPase family. The cofactor is Mg(2+).

The enzyme catalyses dUTP + H2O = dUMP + diphosphate + H(+). Its pathway is pyrimidine metabolism; dUMP biosynthesis; dUMP from dCTP (dUTP route): step 2/2. This enzyme is involved in nucleotide metabolism: it produces dUMP, the immediate precursor of thymidine nucleotides and it decreases the intracellular concentration of dUTP so that uracil cannot be incorporated into DNA. This is Deoxyuridine 5'-triphosphate nucleotidohydrolase from Thiobacillus denitrificans (strain ATCC 25259 / T1).